Reading from the N-terminus, the 239-residue chain is Geranylgeranylglyceryl phosphate synthase (239 aa).

Mg(2+)-binding residues include Asp18 and Ser45. Sn-glycerol 1-phosphate contacts are provided by residues 166-172, 197-198, and 219-220; these read YLEAGSG, GG, and GT.

This sequence belongs to the GGGP/HepGP synthase family. Group II subfamily. Mg(2+) is required as a cofactor.

It localises to the cytoplasm. The enzyme catalyses sn-glycerol 1-phosphate + (2E,6E,10E)-geranylgeranyl diphosphate = sn-3-O-(geranylgeranyl)glycerol 1-phosphate + diphosphate. Its pathway is membrane lipid metabolism; glycerophospholipid metabolism. Its function is as follows. Prenyltransferase that catalyzes the transfer of the geranylgeranyl moiety of geranylgeranyl diphosphate (GGPP) to the C3 hydroxyl of sn-glycerol-1-phosphate (G1P). This reaction is the first ether-bond-formation step in the biosynthesis of archaeal membrane lipids. This is Geranylgeranylglyceryl phosphate synthase from Pyrobaculum islandicum (strain DSM 4184 / JCM 9189 / GEO3).